The sequence spans 481 residues: Sterol 14-alpha demethylase (481 aa).

A helical transmembrane segment spans residues 1 to 21 (MFIEAIVLALTALILYSVYSV). C422 is a binding site for heme.

It belongs to the cytochrome P450 family. Heme serves as cofactor.

It localises to the membrane. The catalysed reaction is a 14alpha-methyl steroid + 3 reduced [NADPH--hemoprotein reductase] + 3 O2 = a Delta(14) steroid + formate + 3 oxidized [NADPH--hemoprotein reductase] + 4 H2O + 4 H(+). The protein operates within steroid biosynthesis; zymosterol biosynthesis; zymosterol from lanosterol: step 1/6. In terms of biological role, catalyzes C14-demethylation of lanosterol which is critical for ergosterol biosynthesis. It transforms lanosterol into 4,4'-dimethyl cholesta-8,14,24-triene-3-beta-ol. Favors C4 dimethylated substrates, the substrate preference order is 24-methylenedihydrolanosterol &gt; 24,25-dihydrolanosterol &gt; lanosterol &gt; obtusifoliol &gt; norlanosterol. This Trypanosoma cruzi (strain CL Brener) protein is Sterol 14-alpha demethylase.